The sequence spans 91 residues: Acylphosphatase (91 aa).

The region spanning 5-91 (CLHAYVGGRV…QGIAGFVVRR (87 aa)) is the Acylphosphatase-like domain. Active-site residues include R20 and N38.

This sequence belongs to the acylphosphatase family.

The enzyme catalyses an acyl phosphate + H2O = a carboxylate + phosphate + H(+). The protein is Acylphosphatase (acyP) of Pseudomonas aeruginosa (strain ATCC 15692 / DSM 22644 / CIP 104116 / JCM 14847 / LMG 12228 / 1C / PRS 101 / PAO1).